Consider the following 291-residue polypeptide: Undecaprenyl-diphosphatase (291 aa).

8 helical membrane-spanning segments follow: residues 1 to 21 (MFII…LTEF), 48 to 68 (SAFT…AWVF), 102 to 122 (LHVL…DDFI), 126 to 146 (LFSV…MIIA), 162 to 182 (INYF…WPGF), 203 to 223 (SDFT…LSLL), 231 to 251 (IADI…GLIA), and 267 to 287 (FAIY…GFGI).

It belongs to the UppP family.

It is found in the cell membrane. The enzyme catalyses di-trans,octa-cis-undecaprenyl diphosphate + H2O = di-trans,octa-cis-undecaprenyl phosphate + phosphate + H(+). Its function is as follows. Catalyzes the dephosphorylation of undecaprenyl diphosphate (UPP). Confers resistance to bacitracin. This Staphylococcus aureus (strain bovine RF122 / ET3-1) protein is Undecaprenyl-diphosphatase.